The primary structure comprises 351 residues: Outer membrane porin PhoE (351 aa).

Positions 1–21 are cleaved as a signal peptide; it reads MKKSTLALVVMGITASASVQA.

It belongs to the Gram-negative porin family. In terms of assembly, homotrimer.

It is found in the cell outer membrane. Functionally, uptake of inorganic phosphate, phosphorylated compounds, and some other negatively charged solutes. This Citrobacter freundii protein is Outer membrane porin PhoE (phoE).